We begin with the raw amino-acid sequence, 336 residues long: tRNA(Ile)-lysidine synthase (336 aa).

32–37 is an ATP binding site; sequence SGGQDS.

Belongs to the tRNA(Ile)-lysidine synthase family.

Its subcellular location is the cytoplasm. The catalysed reaction is cytidine(34) in tRNA(Ile2) + L-lysine + ATP = lysidine(34) in tRNA(Ile2) + AMP + diphosphate + H(+). Functionally, ligates lysine onto the cytidine present at position 34 of the AUA codon-specific tRNA(Ile) that contains the anticodon CAU, in an ATP-dependent manner. Cytidine is converted to lysidine, thus changing the amino acid specificity of the tRNA from methionine to isoleucine. The protein is tRNA(Ile)-lysidine synthase of Synechococcus sp. (strain JA-3-3Ab) (Cyanobacteria bacterium Yellowstone A-Prime).